We begin with the raw amino-acid sequence, 75 residues long: UPF0352 protein PMI0824 (75 aa).

Belongs to the UPF0352 family.

The protein is UPF0352 protein PMI0824 of Proteus mirabilis (strain HI4320).